A 547-amino-acid polypeptide reads, in one-letter code: MEDSEALGFEHMGLDPRLLQAVTDLGWSRPTLIQEKAIPLALEGKDLLARARTGSGKTAAYAIPMLQLLLHRKATGPVVEQAVRGLVLVPTKELARQAQSMIQQLATYCARDVRVANVSAAEDSVSQRAVLMEKPDVVVGTPSRILSHLQQDSLKLRDSLELLVVDEADLLFSFGFEEELKSLLCHLPRIYQAFLMSATFNEDVQALKELILHNPVTLKLQESQLPGPDQLQQFQVVCETEEDKFLLLYALLKLSLIRGKSLLFVNTLERSYRLRLFLEQFSIPTCVLNGELPLRSRCHIISQFNQGFYDCVIATDAEVLGAPVKGKRRGRGPKGDKASDPEAGVARGIDFHHVSAVLNFDLPPTPEAYIHRAGRTARANNPGIVLTFVLPTEQFHLGKIEELLSGENRGPILLPYQFRMEEIEGFRYRCRDAMRSVTKQAIREARLKEIKEELLHSEKLKTYFEDNPRDLQLLRHDLPLHPAVVKPHLGHVPDYLVPPALRGLVRPHKKRKKLSSSCRKAKRAKSQNPLRSFKHKGKKFRPTAKPS.

Residues 7-35 (LGFEHMGLDPRLLQAVTDLGWSRPTLIQE) carry the Q motif motif. In terms of domain architecture, Helicase ATP-binding spans 38 to 218 (IPLALEGKDL…ELILHNPVTL (181 aa)). 51-58 (ARTGSGKT) provides a ligand contact to ATP. Ser-126 bears the Phosphoserine mark. A Phosphothreonine modification is found at Thr-141. The short motif at 166–169 (DEAD) is the DEAD box element. Positions 230–424 (QLQQFQVVCE…PYQFRMEEIE (195 aa)) constitute a Helicase C-terminal domain. Composition is skewed to basic residues over residues 506 to 525 (RPHK…KRAK) and 532 to 547 (SFKH…AKPS). The segment at 506–547 (RPHKKRKKLSSSCRKAKRAKSQNPLRSFKHKGKKFRPTAKPS) is disordered. Ser-532 is subject to Phosphoserine.

It belongs to the DEAD box helicase family. DDX56/DBP9 subfamily. As to quaternary structure, may form homooligomeric complexes. Interacts with IRF3. Interacts with OCT4 and POU5F1. (Microbial infection) Interacts with West Nile virus capsid protein C. In terms of assembly, (Microbial infection) Interacts with foot-and-mouth disease virus protein 3A; this interaction leads to inhibition of type I interferon production. As to quaternary structure, (Microbial infection) Interacts with EMCV protein 3C; this interaction leads to inhibition of type I interferon production. In terms of tissue distribution, detected in heart, brain, liver, pancreas, placenta and lung.

The protein resides in the nucleus. It localises to the nucleolus. The enzyme catalyses ATP + H2O = ADP + phosphate + H(+). Functionally, nucleolar RNA helicase that plays a role in various biological processes including innate immunity, ribosome biogenesis or nucleolus organization. Plays an essential role in maintaining nucleolar integrity in planarian stem cells. Maintains embryonic stem cells proliferation by conventional regulation of ribosome assembly and interaction with OCT4 and POU5F1 complex. Regulates antiviral innate immunity by inhibiting the virus-triggered signaling nuclear translocation of IRF3. Mechanistically, acts by disrupting the interaction between IRF3 and importin IPO5. May play a role in later stages of the processing of the pre-ribosomal particles leading to mature 60S ribosomal subunits. Has intrinsic ATPase activity. In terms of biological role, (Microbial infection) Helicase activity is important for packaging viral RNA into virions during West Nile virus infection. (Microbial infection) Plays a positive role in foot-and-mouth disease virus replication by inhibiting the phosphorylation of IRF3 leading to inhibition of type I interferon. Its function is as follows. (Microbial infection) Plays a positive role in EMCV replication by interrupting IRF3 phosphorylation and its nucleus translocation. This chain is Probable ATP-dependent RNA helicase DDX56 (DDX56), found in Homo sapiens (Human).